A 410-amino-acid polypeptide reads, in one-letter code: F-box protein At3g61340 (410 aa).

The region spanning Glu-17–Ile-66 is the F-box domain.

The protein is F-box protein At3g61340 of Arabidopsis thaliana (Mouse-ear cress).